A 506-amino-acid chain; its full sequence is Glycine--tRNA ligase (506 aa).

Residues Arg99 and Glu189 each contribute to the substrate site. ATP is bound by residues 221–223 (RNE), 231–236 (FRVREF), 305–306 (EL), and 364–367 (GVDR). Residue 236-240 (FEQME) participates in substrate binding. 360 to 364 (EPSAG) contributes to the substrate binding site.

The protein belongs to the class-II aminoacyl-tRNA synthetase family. In terms of assembly, homodimer.

Its subcellular location is the cytoplasm. It catalyses the reaction tRNA(Gly) + glycine + ATP = glycyl-tRNA(Gly) + AMP + diphosphate. Catalyzes the attachment of glycine to tRNA(Gly). The chain is Glycine--tRNA ligase from Thermus thermophilus (strain ATCC BAA-163 / DSM 7039 / HB27).